The following is a 346-amino-acid chain: Holliday junction branch migration complex subunit RuvB (346 aa).

The segment at 2–183 (TDDRIIGAGA…FGIVQRLEFY (182 aa)) is large ATPase domain (RuvB-L). ATP-binding positions include isoleucine 22, arginine 23, glycine 64, lysine 67, threonine 68, threonine 69, 130–132 (EDF), arginine 173, tyrosine 183, and arginine 220. Threonine 68 is a Mg(2+) binding site. The tract at residues 184 to 254 (SVEELTRIVR…VAQAAMKMLK (71 aa)) is small ATPAse domain (RuvB-S). Residues 257–346 (PEGFDELDRR…DLFAEVPDVG (90 aa)) form a head domain (RuvB-H) region. DNA is bound by residues arginine 293, arginine 312, and arginine 317.

It belongs to the RuvB family. In terms of assembly, homohexamer. Forms an RuvA(8)-RuvB(12)-Holliday junction (HJ) complex. HJ DNA is sandwiched between 2 RuvA tetramers; dsDNA enters through RuvA and exits via RuvB. An RuvB hexamer assembles on each DNA strand where it exits the tetramer. Each RuvB hexamer is contacted by two RuvA subunits (via domain III) on 2 adjacent RuvB subunits; this complex drives branch migration. In the full resolvosome a probable DNA-RuvA(4)-RuvB(12)-RuvC(2) complex forms which resolves the HJ.

Its subcellular location is the cytoplasm. It catalyses the reaction ATP + H2O = ADP + phosphate + H(+). In terms of biological role, the RuvA-RuvB-RuvC complex processes Holliday junction (HJ) DNA during genetic recombination and DNA repair, while the RuvA-RuvB complex plays an important role in the rescue of blocked DNA replication forks via replication fork reversal (RFR). RuvA specifically binds to HJ cruciform DNA, conferring on it an open structure. The RuvB hexamer acts as an ATP-dependent pump, pulling dsDNA into and through the RuvAB complex. RuvB forms 2 homohexamers on either side of HJ DNA bound by 1 or 2 RuvA tetramers; 4 subunits per hexamer contact DNA at a time. Coordinated motions by a converter formed by DNA-disengaged RuvB subunits stimulates ATP hydrolysis and nucleotide exchange. Immobilization of the converter enables RuvB to convert the ATP-contained energy into a lever motion, pulling 2 nucleotides of DNA out of the RuvA tetramer per ATP hydrolyzed, thus driving DNA branch migration. The RuvB motors rotate together with the DNA substrate, which together with the progressing nucleotide cycle form the mechanistic basis for DNA recombination by continuous HJ branch migration. Branch migration allows RuvC to scan DNA until it finds its consensus sequence, where it cleaves and resolves cruciform DNA. In Stenotrophomonas maltophilia (strain R551-3), this protein is Holliday junction branch migration complex subunit RuvB.